Reading from the N-terminus, the 223-residue chain is 7-cyano-7-deazaguanine synthase (223 aa).

8–18 serves as a coordination point for ATP; it reads LSGGLDSATTL. Zn(2+) contacts are provided by C187, C197, C200, and C203.

It belongs to the QueC family. Requires Zn(2+) as cofactor.

It catalyses the reaction 7-carboxy-7-deazaguanine + NH4(+) + ATP = 7-cyano-7-deazaguanine + ADP + phosphate + H2O + H(+). It participates in purine metabolism; 7-cyano-7-deazaguanine biosynthesis. Functionally, catalyzes the ATP-dependent conversion of 7-carboxy-7-deazaguanine (CDG) to 7-cyano-7-deazaguanine (preQ(0)). The protein is 7-cyano-7-deazaguanine synthase of Methylococcus capsulatus (strain ATCC 33009 / NCIMB 11132 / Bath).